The sequence spans 688 residues: Sodium channel and clathrin linker 1 (688 aa).

The residue at position 2 (alanine 2) is an N-acetylalanine. The stretch at leucine 59–threonine 673 forms a coiled coil. Residue serine 681 is modified to Phosphoserine.

Interacts with SCN10A and clathrin. Identified in a complex containing SCN10A, clathrin and SCLT1. Detected in small neurons in dorsal root ganglia. Detected in C-type fibers of sciatic nerve (at protein level).

It is found in the cytoplasm. The protein localises to the cytoskeleton. The protein resides in the microtubule organizing center. Its subcellular location is the centrosome. It localises to the centriole. In terms of biological role, adapter protein that links SCN10A to clathrin. Regulates SCN10A channel activity, possibly by promoting channel internalization. The polypeptide is Sodium channel and clathrin linker 1 (Sclt1) (Rattus norvegicus (Rat)).